A 501-amino-acid polypeptide reads, in one-letter code: MTLVDVRTPDPKRFIPGATGDWEIVIGLEVHAQVLSNSKLFSGASTTFGNAPNSNVSLVDAAMPGMLPVINEECVKQAVRTGLGLKAKINNRSIFDRKNYFYPDLPQGYQISQFKDPIVGEGTITISLGPDRQGNFEDIEIGIERLHLEQDAGKSMHDQHPTMSFVDLNRSGVALMEIVSKPDMRSSDEAKGYLTKLRSIVRYLGTCDGNMDEGSMRADVNVSVRRPGEGFGTRCEIKNVNSIRFVGQAIEYEARRQVAILEDGGVIDQETRLFDPGKGETRSMRSKEDAHDYRYFPDPDLLPLEFDDAFVEALKVDLPELPDDKKARFVADLGLSVYDASILVSEKAIADYYEAVAAGRDAKTAANWVINDLLGALNKFGKDIETTPVSPDQLGGIIDLIKAETISGKIAKDLFEIVWNEGGNPAEIVEARGMKQVTDTGAIEKAVDDIIAANPDQVEKVKAKPTLAGWFVGQVMKATGGKANPQAVQALVKAKLGIEDE.

The protein belongs to the GatB/GatE family. GatB subfamily. In terms of assembly, heterotrimer of A, B and C subunits.

It catalyses the reaction L-glutamyl-tRNA(Gln) + L-glutamine + ATP + H2O = L-glutaminyl-tRNA(Gln) + L-glutamate + ADP + phosphate + H(+). The enzyme catalyses L-aspartyl-tRNA(Asn) + L-glutamine + ATP + H2O = L-asparaginyl-tRNA(Asn) + L-glutamate + ADP + phosphate + 2 H(+). In terms of biological role, allows the formation of correctly charged Asn-tRNA(Asn) or Gln-tRNA(Gln) through the transamidation of misacylated Asp-tRNA(Asn) or Glu-tRNA(Gln) in organisms which lack either or both of asparaginyl-tRNA or glutaminyl-tRNA synthetases. The reaction takes place in the presence of glutamine and ATP through an activated phospho-Asp-tRNA(Asn) or phospho-Glu-tRNA(Gln). The sequence is that of Aspartyl/glutamyl-tRNA(Asn/Gln) amidotransferase subunit B from Agrobacterium fabrum (strain C58 / ATCC 33970) (Agrobacterium tumefaciens (strain C58)).